The following is a 193-amino-acid chain: Small ribosomal subunit protein eS1 (193 aa).

The protein belongs to the eukaryotic ribosomal protein eS1 family.

The polypeptide is Small ribosomal subunit protein eS1 (Methanobrevibacter smithii (strain ATCC 35061 / DSM 861 / OCM 144 / PS)).